The primary structure comprises 291 residues: Protein CMSS1 (291 aa).

Residues 1 to 96 (MADDLGDEWW…KKTITDVLTS (96 aa)) form a disordered region. Residues 17–27 (DVPEVEEETEH) are compositionally biased toward acidic residues. The segment covering 58–79 (VKKECFITQERSEEKPDNESNK) has biased composition (basic and acidic residues).

The protein belongs to the CMS1 family.

The sequence is that of Protein CMSS1 (cmss1) from Danio rerio (Zebrafish).